The sequence spans 64 residues: SPbeta prophage-derived uncharacterized protein YopV (64 aa).

The chain is SPbeta prophage-derived uncharacterized protein YopV (yopV) from Bacillus subtilis (strain 168).